The primary structure comprises 523 residues: GMP synthase [glutamine-hydrolyzing] (523 aa).

The 198-residue stretch at 8–205 (KILILDFGSQ…VVDICGCETN (198 aa)) folds into the Glutamine amidotransferase type-1 domain. Cysteine 85 functions as the Nucleophile in the catalytic mechanism. Active-site residues include histidine 179 and glutamate 181. One can recognise a GMPS ATP-PPase domain in the interval 206–398 (WTAENIIEDA…LGLPAEMLNR (193 aa)). 233–239 (SGGVDSS) is an ATP binding site.

In terms of assembly, homodimer.

It carries out the reaction XMP + L-glutamine + ATP + H2O = GMP + L-glutamate + AMP + diphosphate + 2 H(+). Its pathway is purine metabolism; GMP biosynthesis; GMP from XMP (L-Gln route): step 1/1. Its function is as follows. Catalyzes the synthesis of GMP from XMP. The polypeptide is GMP synthase [glutamine-hydrolyzing] (Histophilus somni (strain 2336) (Haemophilus somnus)).